The chain runs to 348 residues: Protein pelota homolog (348 aa).

This sequence belongs to the eukaryotic release factor 1 family. Pelota subfamily. As to quaternary structure, monomer. It depends on a divalent metal cation as a cofactor.

Its subcellular location is the cytoplasm. Its function is as follows. May function in recognizing stalled ribosomes, interact with stem-loop structures in stalled mRNA molecules, and effect endonucleolytic cleavage of the mRNA. May play a role in the release non-functional ribosomes and degradation of damaged mRNAs. Has endoribonuclease activity. In Methanococcus maripaludis (strain C6 / ATCC BAA-1332), this protein is Protein pelota homolog.